A 1791-amino-acid polypeptide reads, in one-letter code: Protein TIC 214 (1791 aa).

6 helical membrane passes run 19-39 (IINS…FSIG), 68-88 (FIAG…HLAL), 91-111 (PHTI…WNNH), 133-153 (VFLN…SSML), 176-196 (VGWL…LVWI), and 230-250 (IFSI…PSPI). The span at 257 to 271 (GTSETEERGGTKQDQ) shows a compositional bias: basic and acidic residues. Disordered stretches follow at residues 257–278 (GTSE…TEEA) and 1498–1521 (ADQG…PNQE).

The protein belongs to the TIC214 family. As to quaternary structure, part of the Tic complex.

Its subcellular location is the plastid. The protein localises to the chloroplast inner membrane. Its function is as follows. Involved in protein precursor import into chloroplasts. May be part of an intermediate translocation complex acting as a protein-conducting channel at the inner envelope. The protein is Protein TIC 214 of Aethionema grandiflorum (Persian stone-cress).